Consider the following 756-residue polypeptide: Phosphate transporter PHO1 homolog 6 (756 aa).

The region spanning 1–303 (MKFGKDFSSE…SRDAAKSYMK (303 aa)) is the SPX domain. The Cytoplasmic segment spans residues 1–355 (MKFGKDFSSE…KPKRERHRLT (355 aa)). A helical transmembrane segment spans residues 356–376 (FSTGFLGGCMFSLIVALVAIV). Topologically, residues 377 to 396 (RTRNILQDDGQKQYMNTMFP) are extracellular. The chain crosses the membrane as a helical span at residues 397 to 417 (LYSLFGFIMLHMTMYAANIYF). Residues 418 to 440 (WRQYRVNYSFIFGFKQGTELGYK) are Cytoplasmic-facing. Residues 441–461 (QVLFVGFSIGALALLCVLANL) traverse the membrane as a helical segment. The Extracellular portion of the chain corresponds to 462–477 (DMETDPKTKDYQALTE). A helical membrane pass occupies residues 478 to 498 (LLPLFLLIAMFVVLVVPFNIF). Topologically, residues 499-631 (YRSSRFFFLT…DEKDRQIIWR (133 aa)) are cytoplasmic. An EXS domain is found at 562 to 756 (KDSQVFNTFL…SLPFNYEVDH (195 aa)). The helical transmembrane segment at 632-652 (LLGGITSAMAVVFCTYWDLVY) threads the bilayer. The Extracellular portion of the chain corresponds to 653–676 (DWGLLNRTSKNPWLRDNLLIPHKE). The chain crosses the membrane as a helical span at residues 677–697 (VYVLAMILNVVLRFAWMQTVL). The Cytoplasmic portion of the chain corresponds to 698–756 (DFKFESIHTQTVVAVVASLEIIRRGIWNFFRLENEHLNNVGKYRAFKAVSLPFNYEVDH).

It belongs to the SYG1 (TC 2.A.94) family. As to expression, specifically expressed in anther connective tissue.

The protein resides in the cell membrane. In terms of biological role, may transport inorganic phosphate (Pi). In Arabidopsis thaliana (Mouse-ear cress), this protein is Phosphate transporter PHO1 homolog 6 (PHO1-H6).